We begin with the raw amino-acid sequence, 342 residues long: L-threonine 3-dehydrogenase (342 aa).

Cys-38 is a binding site for Zn(2+). Active-site charge relay system residues include Thr-40 and His-43. Residues His-63, Glu-64, Cys-93, Cys-96, Cys-99, and Cys-107 each coordinate Zn(2+). NAD(+) is bound by residues Ile-175, Asp-195, Arg-200, 262 to 264 (LGI), and 286 to 287 (IY).

Belongs to the zinc-containing alcohol dehydrogenase family. Homotetramer. Zn(2+) serves as cofactor.

It localises to the cytoplasm. It carries out the reaction L-threonine + NAD(+) = (2S)-2-amino-3-oxobutanoate + NADH + H(+). It functions in the pathway amino-acid degradation; L-threonine degradation via oxydo-reductase pathway; glycine from L-threonine: step 1/2. Catalyzes the NAD(+)-dependent oxidation of L-threonine to 2-amino-3-ketobutyrate. This chain is L-threonine 3-dehydrogenase, found in Paraburkholderia phymatum (strain DSM 17167 / CIP 108236 / LMG 21445 / STM815) (Burkholderia phymatum).